Reading from the N-terminus, the 323-residue chain is Transcription factor MYB56 (323 aa).

A compositionally biased stretch (basic and acidic residues) spans Met1–Glu14. The interval Met1 to Ser84 is disordered. Positions Asn27 to Val60 are enriched in polar residues. Positions Glu66–Leu78 are enriched in basic and acidic residues. HTH myb-type domains follow at residues Thr88–Leu139 and Asp140–Thr194. DNA-binding regions (H-T-H motif) lie at residues Trp116–Gln138 and Trp167–Met190. The interval Arg192–Ser217 is disordered.

Forms homodimer. Interacts with the dephosphorylated active form of BES1 in the nucleus of quiescent center (QC) cells. Interacts with BPM1, BPM2, BPM3, BPM4, BPM5 and BPM6 at the promoter of FLOWERING LOCUS T (FT). As to expression, mostly expressed in flowers (at protein level) and siliques, and, to a lower extent, in roots, stems and leaves. Expressed in embryos (e.g. heart and torpedo stages) and cotyledons, and, at low levels, in roots and inflorescence. Accumulates specifically in root apical meristem quiescent center (QC) and vascular initial cells.

The protein resides in the nucleus. The protein localises to the cytoplasm. Its subcellular location is the cytosol. Acts as a cell-specific local repressor of quiescent center (QC) self-renewal by cell divisions in the primary root. Counteracts brassinosteroid (BR)-mediated cell division in the QC cells. Regulates maternally seed size, especially before the heart stage, promoting both endothelial cells expansion and cell number in the outer integument layer of the seed coat. Modulates the expression of genes involved in cell wall metabolism such as cell division and expansion. Negative regulator of flowering via the repression of FT transcription. This Arabidopsis thaliana (Mouse-ear cress) protein is Transcription factor MYB56.